The primary structure comprises 342 residues: Holliday junction branch migration complex subunit RuvB (342 aa).

Positions 1–179 (MTNILSPEKS…FGIPMRLNFY (179 aa)) are large ATPase domain (RuvB-L). Residues Ile18, Arg19, Gly60, Lys63, Thr64, Thr65, 126 to 128 (EDF), Arg169, Tyr179, and Arg216 each bind ATP. Residue Thr64 coordinates Mg(2+). Residues 180 to 250 (NTEELKQVLN…ICDFGLKRLT (71 aa)) form a small ATPAse domain (RuvB-S) region. The tract at residues 253-342 (SIGLDSNDYR…HQFNILNENE (90 aa)) is head domain (RuvB-H). DNA contacts are provided by Arg289, Arg308, and Arg313.

It belongs to the RuvB family. In terms of assembly, homohexamer. Forms an RuvA(8)-RuvB(12)-Holliday junction (HJ) complex. HJ DNA is sandwiched between 2 RuvA tetramers; dsDNA enters through RuvA and exits via RuvB. An RuvB hexamer assembles on each DNA strand where it exits the tetramer. Each RuvB hexamer is contacted by two RuvA subunits (via domain III) on 2 adjacent RuvB subunits; this complex drives branch migration. In the full resolvosome a probable DNA-RuvA(4)-RuvB(12)-RuvC(2) complex forms which resolves the HJ.

It is found in the cytoplasm. It carries out the reaction ATP + H2O = ADP + phosphate + H(+). The RuvA-RuvB-RuvC complex processes Holliday junction (HJ) DNA during genetic recombination and DNA repair, while the RuvA-RuvB complex plays an important role in the rescue of blocked DNA replication forks via replication fork reversal (RFR). RuvA specifically binds to HJ cruciform DNA, conferring on it an open structure. The RuvB hexamer acts as an ATP-dependent pump, pulling dsDNA into and through the RuvAB complex. RuvB forms 2 homohexamers on either side of HJ DNA bound by 1 or 2 RuvA tetramers; 4 subunits per hexamer contact DNA at a time. Coordinated motions by a converter formed by DNA-disengaged RuvB subunits stimulates ATP hydrolysis and nucleotide exchange. Immobilization of the converter enables RuvB to convert the ATP-contained energy into a lever motion, pulling 2 nucleotides of DNA out of the RuvA tetramer per ATP hydrolyzed, thus driving DNA branch migration. The RuvB motors rotate together with the DNA substrate, which together with the progressing nucleotide cycle form the mechanistic basis for DNA recombination by continuous HJ branch migration. Branch migration allows RuvC to scan DNA until it finds its consensus sequence, where it cleaves and resolves cruciform DNA. The chain is Holliday junction branch migration complex subunit RuvB from Rickettsia typhi (strain ATCC VR-144 / Wilmington).